The sequence spans 65 residues: Seminal plasma acrosin inhibitor A1 (65 aa).

Residues 1–59 (TRKQPNCNVYRSHLFFCTRQMDPICGTNGKSYANPCIFCSEKGLRNQKFDFGHWGHCRE) enclose the Kazal-like domain. 3 disulfide bridges follow: Cys7–Cys39, Cys17–Cys36, and Cys25–Cys57. Residue Ser12 is glycosylated (O-linked (GalNAc...) serine). Ser62 carries an O-linked (GalNAc...) serine glycan.

In terms of processing, the identity of the O-linked saccharides are not reported in Ref.1. The O-linked polysaccharides on Ser-12 and Ser-62 are probably the mucin type linked to GalNAc. In terms of tissue distribution, seminal plasma.

It localises to the secreted. Its function is as follows. Inhibits acrosin. This Sus scrofa (Pig) protein is Seminal plasma acrosin inhibitor A1.